Reading from the N-terminus, the 149-residue chain is uncharacterized protein (149 aa).

Over residues M1–R11 the composition is skewed to basic and acidic residues. The tract at residues M1 to P20 is disordered.

This is an uncharacterized protein from Sinorhizobium fredii (strain NBRC 101917 / NGR234).